Reading from the N-terminus, the 531-residue chain is MSKVDVKIGADSISSSDEILVPSRLADVTLAFMEENDAAVPEITPEQEKKLKRKLFLTIFTFVSAINLLLYMDKATLSYDSILGFFEDTGLTQNTYNTVNTLFYVGFAIGQFPGQYLAQKLPLGKFLGGLLATWTILIFLSCTAYNFSGVVALRFFLGLTESVVIPILITTMGMFFDASERAAAQPFFFAACMGSPIPTGFIAYGVLHITNPSISLWKIFTIIIGGLTFIMTVVVILWFPNNPADVKFFSIQERVWIIRRVQASTGSSIEQKVFKKSQFREAMKDYITWLFGLFFLLQQLANNLPYQQNLLFEGMGGVDALGSTLVSVAGAGFAVVCAFIATLMLAKWKNISALTAIFWTLPALVGSIAAAALPWDNKIGILANICMAGQIFGIPFIIALSWASSSASGYTKKLTRSSVSLFAMGIANIISPQIWREKDSPRFLPAWIVQIVLSFSLAPAILLLIHFILKRRNNQRLKNYDENLQNYLDRIQLIESENPSSIEEGKVVTHENNLAVFDLTDLENETFIYPL.

Residues 1–54 lie on the Cytoplasmic side of the membrane; it reads MSKVDVKIGADSISSSDEILVPSRLADVTLAFMEENDAAVPEITPEQEKKLKRK. A helical transmembrane segment spans residues 55 to 75; it reads LFLTIFTFVSAINLLLYMDKA. At 76 to 97 the chain is on the lumenal side; the sequence is TLSYDSILGFFEDTGLTQNTYN. The helical transmembrane segment at 98-118 threads the bilayer; the sequence is TVNTLFYVGFAIGQFPGQYLA. At 119–120 the chain is on the cytoplasmic side; it reads QK. A helical transmembrane segment spans residues 121 to 141; that stretch reads LPLGKFLGGLLATWTILIFLS. Over 142 to 154 the chain is Lumenal; it reads CTAYNFSGVVALR. N-linked (GlcNAc...) asparagine glycosylation is present at N146. The helical transmembrane segment at 155–175 threads the bilayer; sequence FFLGLTESVVIPILITTMGMF. Residues 176–186 lie on the Cytoplasmic side of the membrane; the sequence is FDASERAAAQP. A helical transmembrane segment spans residues 187–207; sequence FFFAACMGSPIPTGFIAYGVL. Over 208–218 the chain is Lumenal; that stretch reads HITNPSISLWK. Residues 219–239 traverse the membrane as a helical segment; that stretch reads IFTIIIGGLTFIMTVVVILWF. Topologically, residues 240–285 are cytoplasmic; sequence PNNPADVKFFSIQERVWIIRRVQASTGSSIEQKVFKKSQFREAMKD. Residues 286-306 form a helical membrane-spanning segment; that stretch reads YITWLFGLFFLLQQLANNLPY. Over 307-324 the chain is Lumenal; the sequence is QQNLLFEGMGGVDALGST. The helical transmembrane segment at 325–345 threads the bilayer; sequence LVSVAGAGFAVVCAFIATLML. At 346–352 the chain is on the cytoplasmic side; sequence AKWKNIS. A helical transmembrane segment spans residues 353 to 373; that stretch reads ALTAIFWTLPALVGSIAAAAL. Over 374–378 the chain is Lumenal; the sequence is PWDNK. The chain crosses the membrane as a helical span at residues 379-399; the sequence is IGILANICMAGQIFGIPFIIA. The Cytoplasmic segment spans residues 400-413; that stretch reads LSWASSSASGYTKK. Residues 414–436 form a helical membrane-spanning segment; the sequence is LTRSSVSLFAMGIANIISPQIWR. Residues 437 to 447 are Lumenal-facing; sequence EKDSPRFLPAW. Residues 448–468 traverse the membrane as a helical segment; the sequence is IVQIVLSFSLAPAILLLIHFI. Positions 469 to 498 form a coiled coil; it reads LKRRNNQRLKNYDENLQNYLDRIQLIESEN. Topologically, residues 469 to 531 are cytoplasmic; it reads LKRRNNQRLK…LENETFIYPL (63 aa). Residues S500 and S501 each carry the phosphoserine modification.

The protein belongs to the major facilitator superfamily. Allantoate permease family.

Its subcellular location is the cell membrane. It is found in the endoplasmic reticulum membrane. Its function is as follows. High affinity cysteine-specific transporter. Major contributor to cysteine transport when cysteine, at low concentrations, is provided as the sole sulfur source. The chain is High affinity cysteine transporter (YCT1) from Saccharomyces cerevisiae (strain ATCC 204508 / S288c) (Baker's yeast).